A 251-amino-acid chain; its full sequence is Probable phosphatase Sama_2233 (251 aa).

Residues histidine 8, histidine 10, histidine 16, histidine 41, glutamate 74, histidine 102, histidine 132, aspartate 193, and histidine 195 each coordinate Zn(2+).

It belongs to the PHP family. The cofactor is Zn(2+).

This chain is Probable phosphatase Sama_2233, found in Shewanella amazonensis (strain ATCC BAA-1098 / SB2B).